The chain runs to 413 residues: Amino acid transporter AVT3B (413 aa).

The Cytoplasmic segment spans residues 1–27; it reads MGLEEQGRAREDTPLLGKGRPLSSKFK. The chain crosses the membrane as a helical span at residues 28 to 48; it reads TFANVFIAIVGAGVLGLPYAF. Topologically, residues 49-54 are vacuolar; sequence KRTGWL. Residues 55 to 75 form a helical membrane-spanning segment; it reads MGLLTLFSVAALINHCMMLLV. Residues 76–103 lie on the Cytoplasmic side of the membrane; it reads HIRRKLGVSNIGSFGDLGFAACGNLGRF. Residues 104 to 124 traverse the membrane as a helical segment; that stretch reads VVDILIILSQAGFCVGYLIFI. At 125–145 the chain is on the vacuolar side; sequence GNTLANLSKPTKSTTLMSLRH. Residues 146-166 traverse the membrane as a helical segment; it reads LMGVSPKSLYIWGCFPFQLGL. Over 167-174 the chain is Cytoplasmic; sequence NSIKTLTH. Residues 175–195 form a helical membrane-spanning segment; the sequence is LAPLSIFADVVDLGAMAVVIV. Over 196 to 207 the chain is Vacuolar; it reads EDIKITVVQRPQ. Residues 208-228 traverse the membrane as a helical segment; that stretch reads VVAFGGMSVFFYGMGVAVYAF. Residues 229–249 lie on the Cytoplasmic side of the membrane; sequence EGVGMVLPLESETKDKDKFGK. A helical membrane pass occupies residues 250-270; that stretch reads VLALSMLFIAVMYGSFGVLGY. The Vacuolar segment spans residues 271 to 288; sequence MAFGDDTMDIITANLGAG. The helical transmembrane segment at 289–309 threads the bilayer; it reads VVSSLVQLGLCINLFFTFPLM. The Cytoplasmic portion of the chain corresponds to 310-331; that stretch reads MNPVFEIVERRFWSGMYCVWLR. Residues 332–352 form a helical membrane-spanning segment; that stretch reads WLLVLAVTLVALLVPNFADFL. The Vacuolar portion of the chain corresponds to 353–355; the sequence is SLV. A helical transmembrane segment spans residues 356–376; that stretch reads GSSVCCALGFVLPSLFHLMVF. Over 377 to 390 the chain is Cytoplasmic; sequence KDEMEWKQRALDVG. The chain crosses the membrane as a helical span at residues 391 to 411; sequence ILLLGVILGVSGTWSSLTEIF. Residues 412–413 are Vacuolar-facing; sequence QE.

The protein belongs to the amino acid/polyamine transporter 2 family. Amino acid/auxin permease (AAAP) (TC 2.A.18.8) subfamily. Ubiquitous.

Its subcellular location is the vacuole membrane. Translocates preferentially neutral amino acids from the vacuole to the cytoplasm. This is Amino acid transporter AVT3B from Arabidopsis thaliana (Mouse-ear cress).